Reading from the N-terminus, the 219-residue chain is Trafficking protein particle complex subunit 4 (219 aa).

The protein belongs to the TRAPP small subunits family. TRAPPC4 subfamily. Component of the multisubunit TRAPP (transport protein particle) complex, which includes at least TRAPPC2, TRAPPC2L, TRAPPC3, TRAPPC3L, TRAPPC4, TRAPPC5, TRAPPC8, TRAPPC9, TRAPPC10, TRAPPC11 and TRAPPC12. Interacts with SDC2.

The protein resides in the postsynaptic cell membrane. It localises to the golgi apparatus membrane. Its subcellular location is the endoplasmic reticulum. The protein localises to the vesicle. Core component of the TRAPP complexes which has a function of guanine nucleotide exchange factor activity for Rab1 GTPase. Plays a role in vesicular transport from endoplasmic reticulum to Golgi and autophagy. May play a role in dendrite postsynaptic membrane trafficking. This Homo sapiens (Human) protein is Trafficking protein particle complex subunit 4.